Consider the following 132-residue polypeptide: Small ribosomal subunit protein uS8 (132 aa).

It belongs to the universal ribosomal protein uS8 family. As to quaternary structure, part of the 30S ribosomal subunit. Contacts proteins S5 and S12.

Functionally, one of the primary rRNA binding proteins, it binds directly to 16S rRNA central domain where it helps coordinate assembly of the platform of the 30S subunit. This Leptospira biflexa serovar Patoc (strain Patoc 1 / Ames) protein is Small ribosomal subunit protein uS8.